A 51-amino-acid polypeptide reads, in one-letter code: Large ribosomal subunit protein eL40 (51 aa).

This sequence belongs to the eukaryotic ribosomal protein eL40 family.

This chain is Large ribosomal subunit protein eL40, found in Thermococcus gammatolerans (strain DSM 15229 / JCM 11827 / EJ3).